We begin with the raw amino-acid sequence, 558 residues long: Autophagy-related protein 18 (558 aa).

One copy of the WD 1 repeat lies at 4-42 (DYPPTINFINFNQTGSCISIATDDGFSIYNCDPFGKFYS). The disordered stretch occupies residues 176-264 (SSSSSQVEPP…FQQTGITGSS (89 aa)). Over residues 188-201 (PQQRSNFSGNTLET) the composition is skewed to polar residues. A compositionally biased stretch (low complexity) spans 210-252 (GSNNSNNGNNNNNNNNNNNNNNNNNNNNNNNNNNSNNEENSNS). Positions 253–264 (KSFQQTGITGSS) are enriched in polar residues. WD repeat units follow at residues 290–330 (AHKG…KIYQ) and 335–374 (TYPTEVYSLAFSKDNQFLAATSSSKTVHIFKLGKIMETSS). Positions 331 to 335 (FRRGT) match the L/FRRG motif motif. Residues 400-432 (SSESLTESQSKDPHVDTSRSTVGRMIRKSSQQL) are disordered.

Belongs to the WD repeat PROPPIN family. In terms of assembly, component of the PI(3,5)P2 regulatory complex.

Its subcellular location is the preautophagosomal structure membrane. It localises to the vacuole membrane. The protein localises to the endosome membrane. In terms of biological role, the PI(3,5)P2 regulatory complex regulates both the synthesis and turnover of phosphatidylinositol 3,5-bisphosphate (PtdIns(3,5)P2). Necessary for proper vacuole morphology. Plays an important role in osmotically-induced vacuole fragmentation. Required for cytoplasm to vacuole transport (Cvt) vesicle formation, pexophagy and starvation-induced autophagy. Involved in correct ATG9 trafficking to the pre-autophagosomal structure. Might also be involved in premeiotic DNA replication. The sequence is that of Autophagy-related protein 18 (ATG18) from Vanderwaltozyma polyspora (strain ATCC 22028 / DSM 70294 / BCRC 21397 / CBS 2163 / NBRC 10782 / NRRL Y-8283 / UCD 57-17) (Kluyveromyces polysporus).